Reading from the N-terminus, the 53-residue chain is Tryptophan RNA-binding attenuator protein inhibitory protein (53 aa).

2 CXXCXGXG motif repeats span residues 12–19 (CPKCERAG) and 26–33 (CPACSGKG).

As to quaternary structure, homopentamer or homohexamer.

It is found in the cytoplasm. Its function is as follows. By forming a complex with tryptophan-activated TRAP, and masking its RNA binding site, it inhibits TRAP's RNA binding ability, thereby abolishing TRAP regulation of gene expression, leading to antitermination and increased trp operon expression. AT acts by competing with messenger RNA for the RNA binding domain of TRAP. The sequence is that of Tryptophan RNA-binding attenuator protein inhibitory protein (rtpA) from Bacillus subtilis (strain 168).